Here is a 160-residue protein sequence, read N- to C-terminus: Protein cornichon homolog 2 (160 aa).

Residues 1–10 (MAFTFAAFCY) are Cytoplasmic-facing. Residues 11–31 (MLTLVLCAALIFFVIWQIIAF) traverse the membrane as a helical segment. At 32–72 (DELRTDFKNPIDQSNPTRARERILNIERICNLLRRLVVPEY) the chain is on the lumenal side. Residues 73–93 (SIHGLFCLMFMCAGEWVTLGL) traverse the membrane as a helical segment. Over 94–138 (NIPLLLYHLWRFFHRPADGSEVMYDPVSVMNADILNYCQKESWCK) the chain is Cytoplasmic. The chain crosses the membrane as a helical span at residues 139 to 159 (LGFYLLSFFYYLYSMVYALVS). Phenylalanine 160 is a topological domain (lumenal).

This sequence belongs to the cornichon family.

It is found in the membrane. In terms of biological role, regulates the trafficking and gating properties of AMPA-selective glutamate receptors (AMPARs). This chain is Protein cornichon homolog 2 (cnih2), found in Danio rerio (Zebrafish).